Here is a 322-residue protein sequence, read N- to C-terminus: Large ribosomal subunit protein uL15m (322 aa).

The N-terminal 57 residues, 1 to 57 (MKAERQTGLRNSFTTVIGRKLINTFVPSMMLTSVAGNDIFFRGLFKSPVLAFQSYRY), are a transit peptide targeting the mitochondrion. A disordered region spans residues 69-99 (GSTKSFKRLGRGPSSGLGKTSGRGQKGQKAR). Residues 81–93 (PSSGLGKTSGRGQ) show a composition bias toward gly residues.

Belongs to the universal ribosomal protein uL15 family. In terms of assembly, component of the mitochondrial large ribosomal subunit (mt-LSU). Mature yeast 74S mitochondrial ribosomes consist of a small (37S) and a large (54S) subunit. The 37S small subunit contains a 15S ribosomal RNA (15S mt-rRNA) and 34 different proteins. The 54S large subunit contains a 21S rRNA (21S mt-rRNA) and 46 different proteins.

The protein localises to the mitochondrion. Component of the mitochondrial ribosome (mitoribosome), a dedicated translation machinery responsible for the synthesis of mitochondrial genome-encoded proteins, including at least some of the essential transmembrane subunits of the mitochondrial respiratory chain. The mitoribosomes are attached to the mitochondrial inner membrane and translation products are cotranslationally integrated into the membrane. The chain is Large ribosomal subunit protein uL15m (MRPL10) from Saccharomyces cerevisiae (strain ATCC 204508 / S288c) (Baker's yeast).